A 607-amino-acid chain; its full sequence is Autophagy-related protein 16-1 (607 aa).

The segment at 13–43 is interaction with ATG5; the sequence is WKRHIAEELRRRDRLQRQAFEEIILQYTKLL. Residues 79-230 adopt a coiled-coil conformation; that stretch reads DSQLQEMAQL…QKELAEAAKE (152 aa). S139 carries the phosphoserine modification. Positions 207–230 are WIPI2-binding; sequence AENEKDSRRRQARLQKELAEAAKE. An RB1CC1-binding region spans residues 230-242; the sequence is EPLPVEQDDDIEV. Phosphoserine is present on residues S269 and S287. The short motif at 296–299 is the Caspase cleavage element; sequence DIMD. 7 WD repeats span residues 320–359, 364–403, 406–445, 447–484, 486–525, 532–573, and 575–607; these read AHDGEVNAVQFSPGSRLLATGGMDRRVKLWEAFGDKCEFK, GSNAGITSIEFDSAGAYLLAASNDFASRIWTVDDYRLRHT, GHSGKVLSAKFLLDNARIVSGSHDRTLKLWDLRSKVCIKT, FAGSSCNDIVCTEQCVMSGHFDKKIRFWDIRSESVVRE, ELLGKITALDLNPERTELLSCSRDDLLKVIDLRTNAVKQT, KCGS…KVLS, and QHSSSINAVAWAPSGLHVVSVDKGSRAVLWAQP.

This sequence belongs to the WD repeat ATG16 family. Homodimer. Homooligomer. Heterooligomer with ATG16L2. Interacts with WIPI1. Interacts with WIPI2. Interacts with RB1CC1; the interaction is required for ULK1 complex-dependent autophagy. Interacts with ATG5. Part of the minor complex composed of 4 sets of ATG12-ATG5 and ATG16L1 (400 kDa); this complex interacts with ATG3 leading to disruption of ATG7 interaction and promotion of ATG8-like proteins lipidation. Part of the major complex composed of 8 sets of ATG12-ATG5 and ATG16L1 (800 kDa). Interacts with RAB33B (GTP- and GDP-bound forms); the complex consists of a tetramer where two RAB33B molecules bind independently one molecule of the ATG16L1 homodimer; the interaction promotes ATG12-ATG5-ATG16L1 complex recruitment to phagophores. Interacts (via WD repeats) with TMEM59; the interaction mediates unconventional autophagic activity of TMEM59. Interacts with TLR2. Interacts (via WD repeats) with MEFV. Interacts (via N-terminal) with CLTC. Interacts with NOD1. Interacts with NOD2. Interacts with TUFM. Interacts with TRIM16. Interacts (via WD repeats) with SPATA33. Interacts with Irgm1. In terms of processing, proteolytic cleavage by activated CASP3 leads to degradation and may regulate autophagy upon cellular stress and apoptotic stimuli. Post-translationally, phosphorylation at Ser-139 promotes association with the ATG12-ATG5 conjugate to form the ATG12-ATG5-ATG16L1 complex. In terms of tissue distribution, widely expressed. Expressed in the testis and sperm midpiece (at protein level). Expressed in liver. As to expression, highly expressed in liver. In terms of tissue distribution, expressed in brain.

The protein localises to the cytoplasm. It is found in the preautophagosomal structure membrane. Its subcellular location is the endosome membrane. It localises to the lysosome membrane. In terms of biological role, plays an essential role in both canonical and non-canonical autophagy: interacts with ATG12-ATG5 to mediate the lipidation to ATG8 family proteins (MAP1LC3A, MAP1LC3B, MAP1LC3C, GABARAPL1, GABARAPL2 and GABARAP). Acts as a molecular hub, coordinating autophagy pathways via distinct domains that support either canonical or non-canonical signaling. During canonical autophagy, interacts with ATG12-ATG5 to mediate the conjugation of phosphatidylethanolamine (PE) to ATG8 proteins, to produce a membrane-bound activated form of ATG8. Thereby, controls the elongation of the nascent autophagosomal membrane. As part of the ATG8 conjugation system with ATG5 and ATG12, required for recruitment of LRRK2 to stressed lysosomes and induction of LRRK2 kinase activity in response to lysosomal stress. Also involved in non-canonical autophagy, a parallel pathway involving conjugation of ATG8 proteins to single membranes at endolysosomal compartments, probably by catalyzing conjugation of phosphatidylserine (PS) to ATG8. Non-canonical autophagy plays a key role in epithelial cells to limit lethal infection by influenza A (IAV) virus. Regulates mitochondrial antiviral signaling (MAVS)-dependent type I interferon (IFN-I) production. Negatively regulates NOD1- and NOD2-driven inflammatory cytokine response. Instead, promotes an autophagy-dependent antibacterial pathway together with NOD1 or NOD2. Plays a role in regulating morphology and function of Paneth cell. In Mus musculus (Mouse), this protein is Autophagy-related protein 16-1.